The sequence spans 235 residues: Ornithine decarboxylase antizyme 3 (235 aa).

Phosphoserine is present on residues Ser-9 and Ser-12.

Belongs to the ODC antizyme family. Interacts with ODC1 and thereby sterically blocks ODC homodimerization. Interacts with AZIN2; this interaction disrupts the interaction between the antizyme and ODC1. Interacts with GGN. Testis specific.

It localises to the nucleus. It is found in the cytoplasm. Functionally, ornithine decarboxylase (ODC) antizyme protein that negatively regulates ODC activity and intracellular polyamine biosynthesis and uptake in response to increased intracellular polyamine levels. Binds to ODC monomers, inhibiting the assembly of the functional ODC homodimers. Does not target the ODC monomers for degradation, which allows a protein synthesis-independent restoration of ODC activity. Stabilizes AZIN2 by interfering with its ubiquitination. Involved in the translocation of AZNI2 from ER-Golgi intermediate compartment (ERGIC) to the cytosol. Probably plays a key role in spermatogenesis by regulating the intracellular concentration of polyamines in haploid germ cells. The chain is Ornithine decarboxylase antizyme 3 (OAZ3) from Homo sapiens (Human).